A 229-amino-acid polypeptide reads, in one-letter code: NAD(P)H-hydrate epimerase (229 aa).

The region spanning 10–217 (AINVDLELFN…ALQRKYELNL (208 aa)) is the YjeF N-terminal domain. Residue 60–64 (NNGGD) participates in (6S)-NADPHX binding. Residues Asn-61 and Asp-125 each coordinate K(+). Residues 129–135 (GFSFKPP) and Asp-158 contribute to the (6S)-NADPHX site. Ser-161 lines the K(+) pocket.

It belongs to the NnrE/AIBP family. The cofactor is K(+).

It carries out the reaction (6R)-NADHX = (6S)-NADHX. It catalyses the reaction (6R)-NADPHX = (6S)-NADPHX. Functionally, catalyzes the epimerization of the S- and R-forms of NAD(P)HX, a damaged form of NAD(P)H that is a result of enzymatic or heat-dependent hydration. This is a prerequisite for the S-specific NAD(P)H-hydrate dehydratase to allow the repair of both epimers of NAD(P)HX. The protein is NAD(P)H-hydrate epimerase of Drosophila virilis (Fruit fly).